The chain runs to 327 residues: MTHTLRVIFAGTPEFAAAALAAIHDAGFAAPLVLTQPDRPAGRGMKLQASAVKRYALEHGLPVAQPPSLRRAGKYPAEAAEAIELLRATPHDVMVVAAYGLLLPQEVLDIPRHGCINIHASLLPRWRGAAPIHRAIEAGDAETGVTLMQMDAGLDTGAMIQASRIAIAPDDTTATLHDRLAADGARLIVDALARLERDGTLAATPQPADGVTYAEKIGKHEAALDWRKPADVLARQVRAFDPFPGGVATLDGAAIKIWAAEPATGRGDAAPGTIVEAAPDGVIVACGTGALRVTQLQKPGGKRLPAREFLAGSPLAAGQRFALPDAG.

121–124 provides a ligand contact to (6S)-5,6,7,8-tetrahydrofolate; the sequence is SLLP.

This sequence belongs to the Fmt family.

It carries out the reaction L-methionyl-tRNA(fMet) + (6R)-10-formyltetrahydrofolate = N-formyl-L-methionyl-tRNA(fMet) + (6S)-5,6,7,8-tetrahydrofolate + H(+). Its function is as follows. Attaches a formyl group to the free amino group of methionyl-tRNA(fMet). The formyl group appears to play a dual role in the initiator identity of N-formylmethionyl-tRNA by promoting its recognition by IF2 and preventing the misappropriation of this tRNA by the elongation apparatus. The protein is Methionyl-tRNA formyltransferase of Burkholderia multivorans (strain ATCC 17616 / 249).